The sequence spans 37 residues: Photosystem I reaction center subunit VIII (37 aa).

The helical transmembrane segment at 7-27 threads the bilayer; the sequence is LPAIFVPLVGLVFPAIAMVSL.

The protein belongs to the PsaI family.

The protein resides in the plastid. The protein localises to the chloroplast thylakoid membrane. Its function is as follows. May help in the organization of the PsaL subunit. This Morus indica (Mulberry) protein is Photosystem I reaction center subunit VIII.